We begin with the raw amino-acid sequence, 2332 residues long: Phosphatidylinositol phosphatase PTPRQ (2332 aa).

The first 35 residues, 1–35 (MKKVPIKPEQPEKLRAFNISTHSFSLHWSLPSGHV), serve as a signal peptide directing secretion. 18 Fibronectin type-III domains span residues 36 to 99 (ERYQ…TKPG), 100 to 195 (PPVF…TAES), 199 to 294 (KVVN…SSST), 350 to 438 (PPQN…PPDV), 441 to 539 (AVFD…SHPD), 514 to 606 (GLYE…SVRT), 610 to 705 (VPSS…TSED), 710 to 799 (SPQD…TSET), 804 to 894 (APEN…TEED), 899 to 988 (PPQD…TPEG), 993 to 1093 (PPKD…TDQD), 1098 to 1190 (FVGN…TEED), 1192 to 1282 (PETS…TDES), 1287 to 1380 (PPQN…TQES), 1384 to 1470 (VVQN…LPET), 1474 to 1578 (VPTN…TLPG), 1583 to 1681 (PPEN…TLES), and 1686 to 1787 (PPNN…IKAP). Over 36-1947 (ERYQVDLVPD…GEGLSERTVE (1912 aa)) the chain is Extracellular. The N-linked (GlcNAc...) asparagine glycan is linked to N94. 2 N-linked (GlcNAc...) asparagine glycosylation sites follow: N202 and N394. N-linked (GlcNAc...) asparagine glycosylation is found at N944, N1038, N1080, and N1101. N-linked (GlcNAc...) asparagine glycans are attached at residues N1290 and N1295. N-linked (GlcNAc...) asparagine glycosylation is present at N1844. The helical transmembrane segment at 1948–1968 (IILSVTLCILSIILLGTAIFA) threads the bilayer. Residues 1969 to 2332 (FARIRQKQKE…VELEWEETTM (364 aa)) are Cytoplasmic-facing. Residues 2036–2292 (FQEEFSELPK…IFLHQCILDL (257 aa)) form the Tyrosine-protein phosphatase domain. The Phosphocysteine intermediate role is filled by C2233.

It belongs to the protein-tyrosine phosphatase family. Receptor class 2A subfamily. In terms of assembly, interacts with TPRN. TPRN, CLIC5 and PTPQR form concentric rings at the base of stereocilia and may form a complex. In developing kidney, it localizes to the basal membrane of podocytes, beginning when podocyte progenitors can first be identified in the embryonic kidney (at protein level). Expressed in lung and kidney.

The protein resides in the cell projection. Its subcellular location is the stereocilium. The protein localises to the apical cell membrane. It localises to the basal cell membrane. It catalyses the reaction a 1,2-diacyl-sn-glycero-3-phospho-(1D-myo-inositol-3,4,5-trisphosphate) + H2O = a 1,2-diacyl-sn-glycero-3-phospho-(1D-myo-inositol-4,5-bisphosphate) + phosphate. The enzyme catalyses a 1,2-diacyl-sn-glycero-3-phospho-(1D-myo-inositol-3,4,5-trisphosphate) + H2O = a 1,2-diacyl-sn-glycero-3-phospho-(1D-myo-inositol-3,4-bisphosphate) + phosphate. It carries out the reaction a 1,2-diacyl-sn-glycero-3-phospho-(1D-myo-inositol-3,5-bisphosphate) + H2O = a 1,2-diacyl-sn-glycero-3-phospho-(1D-myo-inositol-5-phosphate) + phosphate. The catalysed reaction is a 1,2-diacyl-sn-glycero-3-phospho-(1D-myo-inositol-3,5-bisphosphate) + H2O = a 1,2-diacyl-sn-glycero-3-phospho-(1D-myo-inositol-3-phosphate) + phosphate. Functionally, dephosphorylates phosphatidylinositol phosphates, such as phosphatidylinositol 3,4,5-trisphosphate (PIP3) and phosphatidylinositol 3,5-diphosphates, with preference for PIP3. Phosphate can be hydrolyzed from the D3 and D5 positions in the inositol ring. Has low tyrosine-protein phosphatase activity in vitro; however, the relevance of such activity in vivo is unclear. Plays an important role in adipogenesis of mesenchymal stem cells (MSCs). Regulates the phosphorylation state of AKT1 by regulating the levels of PIP3 in MSCs and preadipocyte cells. Required for hair bundle maturation, a process that enables hair cells to detect and transmit sound and balance signals effectively, therefore affecting auditory function. May act by regulating the level of phosphatidylinositol 4,5-bisphosphate (PIP2) level in the basal region of hair bundles. In Homo sapiens (Human), this protein is Phosphatidylinositol phosphatase PTPRQ (PTPRQ).